A 114-amino-acid polypeptide reads, in one-letter code: Putative ANKRD40 C-terminal-like protein (114 aa).

The polypeptide is Putative ANKRD40 C-terminal-like protein (Homo sapiens (Human)).